Consider the following 437-residue polypeptide: Acyl-coenzyme A thioesterase 2, chloroplastic (437 aa).

A chloroplast-targeting transit peptide spans 1–13 (MDLSSSPNHPITV). HotDog ACOT-type domains are found at residues 89–211 (ILYN…RDSK) and 287–404 (RDTR…RPEA).

The protein belongs to the acyl coenzyme A hydrolase family. In terms of tissue distribution, mostly expressed at low levels in glandular trichomes (lupulin glands), and, to a lower extent, in stems, leaves, flowers and cones.

It localises to the plastid. It is found in the chloroplast. Functionally, acyl-CoA thioesterases are a group of enzymes that catalyze the hydrolysis of acyl-CoAs to the free fatty acid and coenzyme A (CoASH), providing the potential to regulate intracellular levels of acyl-CoAs, free fatty acids and CoASH. The chain is Acyl-coenzyme A thioesterase 2, chloroplastic from Humulus lupulus (European hop).